The primary structure comprises 446 residues: Zinc finger protein BALDIBIS (446 aa).

The tract at residues 20-53 (EHIAPNPNPNPNPTSSNSAKRKRNLPGNPDPDAE) is disordered. Ser58 carries the post-translational modification Phosphoserine. C2H2-type zinc fingers lie at residues 68–90 (FICEVCNKGFKRDQNLQLHRRGH) and 110–140 (YICPEKTCVHHDPARALGDLTGIKKHFSRKH). Positions 132–139 (IKKHFSRK) match the Nuclear localization signal motif. The segment at 145-168 (WKCDKCSKKYAVMSDWKAHSKICG) adopts a C2H2-type 2; degenerate zinc-finger fold. Residues Cys147, Cys150, His163, Cys167, Cys174, Cys176, His189, and Cys193 each contribute to the Zn(2+) site. The segment at 172-195 (YRCDCGTLFSRKDSFITHRAFCDA) adopts a CCHC-type 2; atypical zinc-finger fold. The tract at residues 182 to 194 (RKDSFITHRAFCD) is SHR-binding. Residues 425-446 (HNLPDSSPPASTDGTPTADMNQ) form a disordered region. Residues 427 to 446 (LPDSSPPASTDGTPTADMNQ) show a composition bias toward polar residues.

In terms of assembly, binds to RGA and SCL3 competitively in the nucleus. As to expression, expressed in roots, especially in vascular initials, cortex, endodermis, and quiescent center (QC).

The protein localises to the nucleus. Functionally, transcription factor that, together with JKD, regulates tissue boundaries and asymmetric cell division in roots by a rapid up-regulation of 'SCARECROW' (SCR), thus controlling the nuclear localization of 'SHORT-ROOT' (SHR) and restricting its action. Confines CYCD6 expression to the cortex-endodermis initial/daughter (CEI/CEID) tissues. Binds DNA via its zinc fingers. Recognizes and binds to SCL3 promoter sequence 5'-AGACAA-3' to promote its expression when in complex with RGA. This Arabidopsis thaliana (Mouse-ear cress) protein is Zinc finger protein BALDIBIS.